Here is a 396-residue protein sequence, read N- to C-terminus: Elongation factor Tu 1 (396 aa).

One can recognise a tr-type G domain in the interval 10 to 206 (KPHCNVGTIG…AVDDYIPQPE (197 aa)). The G1 stretch occupies residues 19–26 (GHVDHGKT). 19 to 26 (GHVDHGKT) is a GTP binding site. Thr-26 contributes to the Mg(2+) binding site. The segment at 60–64 (GITIS) is G2. The segment at 81-84 (DCPG) is G3. GTP is bound by residues 81–85 (DCPGH) and 136–139 (NKCD). A G4 region spans residues 136-139 (NKCD). The tract at residues 174–176 (SAL) is G5.

Belongs to the TRAFAC class translation factor GTPase superfamily. Classic translation factor GTPase family. EF-Tu/EF-1A subfamily. As to quaternary structure, monomer.

It is found in the cytoplasm. It carries out the reaction GTP + H2O = GDP + phosphate + H(+). Its function is as follows. GTP hydrolase that promotes the GTP-dependent binding of aminoacyl-tRNA to the A-site of ribosomes during protein biosynthesis. This chain is Elongation factor Tu 1, found in Rhodospirillum rubrum (strain ATCC 11170 / ATH 1.1.1 / DSM 467 / LMG 4362 / NCIMB 8255 / S1).